Consider the following 300-residue polypeptide: Cation-efflux pump FieF (300 aa).

4 helical membrane-spanning segments follow: residues 12 to 32, 39 to 59, 82 to 102, and 114 to 134; these read AAIA…FAWW, ILAA…NLLV, AALA…LTGI, and PGVG…LVSF. 2 residues coordinate Zn(2+): D45 and D49. Residues H153 and D157 each contribute to the Zn(2+) site. Helical transmembrane passes span 156 to 176 and 178 to 198; these read SDVM…YGWH and ADAL…LRMG.

Belongs to the cation diffusion facilitator (CDF) transporter (TC 2.A.4) family. FieF subfamily. Homodimer.

It is found in the cell inner membrane. It carries out the reaction Zn(2+)(in) + H(+)(out) = Zn(2+)(out) + H(+)(in). It catalyses the reaction Cd(2+)(in) + H(+)(out) = Cd(2+)(out) + H(+)(in). The catalysed reaction is Fe(2+)(in) + H(+)(out) = Fe(2+)(out) + H(+)(in). In terms of biological role, divalent metal cation transporter which exports Zn(2+), Cd(2+) and possibly Fe(2+). May be involved in zinc and iron detoxification by efflux. The sequence is that of Cation-efflux pump FieF from Escherichia coli O127:H6 (strain E2348/69 / EPEC).